Here is a 1159-residue protein sequence, read N- to C-terminus: Calcium-activated potassium channel subunit alpha-1 (1159 aa).

Residues 1–24 (EPNMDALIIPVTMEVPCDSRGQRM) are Extracellular-facing. Residues 25-45 (WWAFLASSMVTFFGGLFIILL) form a helical membrane-spanning segment. Residues 46–116 (WRTLKYLWTV…MISAQTLTGR (71 aa)) are Cytoplasmic-facing. S-palmitoyl cysteine attachment occurs at residues Cys-56, Cys-57, and Cys-59. Residues 117-137 (VLVVLVFALSIGALVIYFIDS) form a helical membrane-spanning segment. The Extracellular portion of the chain corresponds to 138-152 (SNPIESCQNFYKDFT). A helical membrane pass occupies residues 153-173 (LQIDMAFNVFFLLYFGLRFIA). The Cytoplasmic portion of the chain corresponds to 174–177 (ANDN). The helical transmembrane segment at 178-198 (LWFWLEVNSVVDFFTVPPVFV) threads the bilayer. Residues 199–202 (SVYL) lie on the Extracellular side of the membrane. Residues 203 to 223 (NRSWLGLRFLRALRLIQFSEI) traverse the membrane as a helical; Voltage-sensor segment. Residues 224-238 (LQFLNILKTSNSIKL) lie on the Cytoplasmic side of the membrane. A helical transmembrane segment spans residues 239-259 (VNLLSIFISTWLTAAGFIHLV). Topologically, residues 260–273 (ENSGDPWENFQNSQ) are extracellular. Residues 274–296 (ALTYWECVYLLMVTMSTVGYGDV) constitute an intramembrane region (pore-forming). Residues 290-293 (TVGY) carry the Selectivity for potassium motif. Topologically, residues 297-305 (YAKTTPGGL) are extracellular. Residues 306–326 (FIVFFILGGLAMFASYVPEII) traverse the membrane as a helical segment. Over 327–1159 (EIIGNRKKYG…PPIREVEDEC (833 aa)) the chain is Cytoplasmic. Residues 345–487 (RKHIVVCGHI…WNWKEGDDAI (143 aa)) form the RCK N-terminal 1 domain. Mg(2+) is bound by residues Glu-377, Gln-400, and Glu-402. The tract at residues 494-514 (LGFIAQSCLAQGLSTMLANLF) is segment S7. The segment S8 stretch occupies residues 551-571 (LSFPTVCELCFVKLKLLMIAI). The tract at residues 615–619 (CKACH) is heme-binding motif. The interval 639-668 (EQPSTLSPKKKQRNGGMRNSPSSSPKLMRH) is disordered. A Phosphothreonine modification is found at Thr-643. 3 positions are modified to phosphoserine: Ser-645, Ser-658, and Ser-662. Residues 717 to 737 (VLSGHVVVCIFGHVSSALIGL) form a segment S9 region. Residues 719-863 (SGHVVVCIFG…MDKSSPDNSP (145 aa)) enclose the RCK N-terminal 2 domain. Thr-850 bears the Phosphothreonine mark. Phosphoserine occurs at positions 858 and 862. The Calcium bowl motif lies at 883–905 (TELVNDTNVQFLDQDDDDDPDTE). Positions 892, 895, 898, and 900 each coordinate Ca(2+). The segment S10 stretch occupies residues 912–932 (FACGTAFAVSVLDSLMSATYF). The span at 1066–1091 (RASLSHSSHSSQSSSKKSSSVHSIPS) shows a compositional bias: low complexity. The tract at residues 1066 to 1124 (RASLSHSSHSSQSSSKKSSSVHSIPSTANRQNRPKSRESRDKQTEKKWFTDEPDNAYPR) is disordered. Residues 1100–1115 (KSRESRDKQTEKKWFT) show a composition bias toward basic and acidic residues. Phosphoserine occurs at positions 1101 and 1104.

This sequence belongs to the potassium channel family. Calcium-activated (TC 1.A.1.3) subfamily. KCa1.1/KCNMA1 sub-subfamily. As to quaternary structure, homotetramer; which constitutes the calcium-activated potassium channel. Interacts with beta subunits KCNMB1, KCNMB2, KCNMB3 and KCNMB4. Interacts with gamma subunits LRRC26, LRRC38, LRRC52 and LRRC55. Beta and gamma subunits are accessory, and modulate its activity. Interacts with RAB11B. Post-translationally, phosphorylated. Phosphorylation by kinases such as PKA and/or PKG. In smooth muscles, phosphorylation affects its activity. Palmitoylation by ZDHHC22 and ZDHHC23 within the intracellular linker between the S0 and S1 transmembrane domains regulates localization to the plasma membrane. Depalmitoylated by LYPLA1 and LYPLAL1, leading to retard exit from the trans-Golgi network. As to expression, expressed in all vascular and smooth muscles.

Its subcellular location is the cell membrane. It carries out the reaction K(+)(in) = K(+)(out). Its activity is regulated as follows. Ethanol and carbon monoxide-bound heme increase channel activation. Heme inhibits channel activation. Functionally, potassium channel activated by both membrane depolarization or increase in cytosolic Ca(2+) that mediates export of K(+). It is also activated by the concentration of cytosolic Mg(2+). Its activation dampens the excitatory events that elevate the cytosolic Ca(2+) concentration and/or depolarize the cell membrane. It therefore contributes to repolarization of the membrane potential. Plays a key role in controlling excitability in a number of systems, such as regulation of the contraction of smooth muscle, the tuning of hair cells in the cochlea, regulation of transmitter release, and innate immunity. In smooth muscles, its activation by high level of Ca(2+), caused by ryanodine receptors in the sarcoplasmic reticulum, regulates the membrane potential. In cochlea cells, its number and kinetic properties partly determine the characteristic frequency of each hair cell and thereby helps to establish a tonotopic map. Kinetics of KCNMA1 channels are determined by alternative splicing, phosphorylation status and its combination with modulating beta subunits. Highly sensitive to both iberiotoxin (IbTx) and charybdotoxin (CTX). The chain is Calcium-activated potassium channel subunit alpha-1 (KCNMA1) from Canis lupus familiaris (Dog).